The chain runs to 688 residues: G protein-coupled receptor kinase 3 (688 aa).

The N-terminal stretch occupies residues 1-190 (MADLEAVLAD…ELNIHLTMND (190 aa)). The 122-residue stretch at 54 to 175 (TFDKIFNQRI…MESDKFTRFC (122 aa)) folds into the RGS domain. Residues 191–453 (FSVHRIIGRG…AQELKTHDFF (263 aa)) form the Protein kinase domain. Residues 197–205 (IGRGGFGEV) and lysine 220 each bind ATP. Catalysis depends on aspartate 317, which acts as the Proton acceptor. The AGC-kinase C-terminal domain maps to 454-521 (RGIDWQHVYL…VISERWQQEV (68 aa)). In terms of domain architecture, PH spans 558 to 652 (DCIVHGYMLK…WKKELTETFM (95 aa)).

Belongs to the protein kinase superfamily. AGC Ser/Thr protein kinase family. GPRK subfamily. Interacts with GIT1. Post-translationally, ubiquitinated. As to expression, ubiquitous; brain, spleen &gt; heart, lung &gt; kidney.

It localises to the postsynapse. It is found in the presynapse. The catalysed reaction is [beta-adrenergic receptor] + ATP = [beta-adrenergic receptor]-phosphate + ADP + H(+). Specifically phosphorylates the agonist-occupied form of the beta-adrenergic and closely related receptors. The sequence is that of G protein-coupled receptor kinase 3 from Bos taurus (Bovine).